We begin with the raw amino-acid sequence, 304 residues long: Ornithine carbamoyltransferase (304 aa).

Carbamoyl phosphate is bound by residues 53 to 56, Gln-80, Arg-104, and 131 to 134; these read STRT and HPCQ. L-ornithine contacts are provided by residues Asn-162, Asp-222, and 226–227; that span reads SM. Carbamoyl phosphate contacts are provided by residues 261–262 and Arg-289; that span reads CL.

This sequence belongs to the aspartate/ornithine carbamoyltransferase superfamily. OTCase family.

It localises to the cytoplasm. It carries out the reaction carbamoyl phosphate + L-ornithine = L-citrulline + phosphate + H(+). It participates in amino-acid biosynthesis; L-arginine biosynthesis; L-arginine from L-ornithine and carbamoyl phosphate: step 1/3. Functionally, reversibly catalyzes the transfer of the carbamoyl group from carbamoyl phosphate (CP) to the N(epsilon) atom of ornithine (ORN) to produce L-citrulline. This Rhizobium johnstonii (strain DSM 114642 / LMG 32736 / 3841) (Rhizobium leguminosarum bv. viciae) protein is Ornithine carbamoyltransferase.